A 411-amino-acid polypeptide reads, in one-letter code: UPF0761 membrane protein PSPA7_4558 (411 aa).

6 consecutive transmembrane segments (helical) span residues 36–56, 92–112, 132–152, 174–194, 207–229, and 244–264; these read LFAV…IPAF, HLTW…LVTI, FLLY…GFAV, LLGL…YSAV, GGMF…VSLF, and IFLL…VLVC.

This sequence belongs to the UPF0761 family.

It localises to the cell inner membrane. This chain is UPF0761 membrane protein PSPA7_4558, found in Pseudomonas paraeruginosa (strain DSM 24068 / PA7) (Pseudomonas aeruginosa (strain PA7)).